Reading from the N-terminus, the 216-residue chain is Probable transaldolase (216 aa).

Lys-83 functions as the Schiff-base intermediate with substrate in the catalytic mechanism.

This sequence belongs to the transaldolase family. Type 3B subfamily.

The protein localises to the cytoplasm. It catalyses the reaction D-sedoheptulose 7-phosphate + D-glyceraldehyde 3-phosphate = D-erythrose 4-phosphate + beta-D-fructose 6-phosphate. Its pathway is carbohydrate degradation; pentose phosphate pathway; D-glyceraldehyde 3-phosphate and beta-D-fructose 6-phosphate from D-ribose 5-phosphate and D-xylulose 5-phosphate (non-oxidative stage): step 2/3. Functionally, transaldolase is important for the balance of metabolites in the pentose-phosphate pathway. In Sorangium cellulosum (strain So ce56) (Polyangium cellulosum (strain So ce56)), this protein is Probable transaldolase.